Here is a 443-residue protein sequence, read N- to C-terminus: MEKTYHFTGIKGSGMSALALMLHQMGKNVQGSDSTDYFFTQRGLEQVGVPLLPFDEKNIKPEFELIIGNAFRDDNNVEIAFAHKNGFPFKRYHEFLGHFMEDFTSIGVAGAHGKTSTTGMLAHVMSNIVDTSYLIGDGTGRGNAGSEYFVFESDEYERHFMPYHPEYTIMTNIDFDHPDYFEGIEDVTSAFQDYANNIKKGIFAYGEDVNLRKLSAKAPIYYYGFEANDDYRAENLIRNTRGSSFDAYFRGEKIGHFVVPAYGKHNVLNALSVVAVCHNLGLDMTDVADHLLTFRGVKRRFTEKKVGETVIIDDFAHHPTEIEATLDAARQKYPDREIVAVFQPHTFTRTIAFADEFAEVLDHADTVYLAQIYGSAREVDHHEITAQDLADKVRKPAKVIELDNVSPLLDHDRGVYVFMGAGNIQKYEIAFEKLLSQTSTNLQ.

Position 110–116 (110–116 (GAHGKTS)) interacts with ATP.

Belongs to the MurCDEF family.

The protein resides in the cytoplasm. It carries out the reaction UDP-N-acetyl-alpha-D-muramate + L-alanine + ATP = UDP-N-acetyl-alpha-D-muramoyl-L-alanine + ADP + phosphate + H(+). It participates in cell wall biogenesis; peptidoglycan biosynthesis. In terms of biological role, cell wall formation. In Lactococcus lactis subsp. cremoris (strain SK11), this protein is UDP-N-acetylmuramate--L-alanine ligase.